The sequence spans 361 residues: Chorismate synthase (361 aa).

Arginine 48 contacts NADP(+). FMN-binding positions include 126-128 (RFS), glycine 286, 301-305 (KPTPS), and arginine 328.

This sequence belongs to the chorismate synthase family. It depends on FMNH2 as a cofactor.

It catalyses the reaction 5-O-(1-carboxyvinyl)-3-phosphoshikimate = chorismate + phosphate. Its pathway is metabolic intermediate biosynthesis; chorismate biosynthesis; chorismate from D-erythrose 4-phosphate and phosphoenolpyruvate: step 7/7. In terms of biological role, catalyzes the anti-1,4-elimination of the C-3 phosphate and the C-6 proR hydrogen from 5-enolpyruvylshikimate-3-phosphate (EPSP) to yield chorismate, which is the branch point compound that serves as the starting substrate for the three terminal pathways of aromatic amino acid biosynthesis. This reaction introduces a second double bond into the aromatic ring system. The sequence is that of Chorismate synthase from Korarchaeum cryptofilum (strain OPF8).